Here is a 252-residue protein sequence, read N- to C-terminus: Small ribosomal subunit protein eS4 (252 aa).

One can recognise an S4 RNA-binding domain in the interval 43-106 (LPLLILVRDM…NKYYRVIPVP (64 aa)).

The protein belongs to the eukaryotic ribosomal protein eS4 family.

The protein is Small ribosomal subunit protein eS4 of Desulfurococcus amylolyticus (strain DSM 18924 / JCM 16383 / VKM B-2413 / 1221n) (Desulfurococcus kamchatkensis).